A 1073-amino-acid polypeptide reads, in one-letter code: Serine/threonine-protein kinase 11-interacting protein (1073 aa).

LRR repeat units lie at residues 166 to 187 (ELQT…LQLL), 189 to 210 (ALRV…LTTL), 212 to 233 (ELEY…GIFS), 236 to 257 (KLLT…EQLV), 258 to 279 (NLQH…APLS), and 283 to 304 (YLKK…RSAT). 4 disordered regions span residues 389-409 (VKVR…SQAL), 455-533 (SRSA…EKPE), 724-817 (EVSS…QGMK), and 834-859 (MGSY…SEET). Over residues 515–532 (REEEADELMLGEEEDEKP) the composition is skewed to acidic residues. 2 stretches are compositionally biased toward polar residues: residues 779–788 (MDTSNSTRTP) and 843–859 (RGPT…SEET).

Belongs to the STK11IP family.

It is found in the cytoplasm. This Gallus gallus (Chicken) protein is Serine/threonine-protein kinase 11-interacting protein (STK11IP).